The following is a 419-amino-acid chain: Probable G-protein coupled receptor 63 (419 aa).

The Extracellular portion of the chain corresponds to 1-81 (MVFSAVLTAF…AFKSLNLPLQ (81 aa)). Residues asparagine 16, asparagine 28, and asparagine 62 are each glycosylated (N-linked (GlcNAc...) asparagine). The helical transmembrane segment at 82-104 (ITLSAIMIFILFVSFLGNLVVCL) threads the bilayer. Over 105–115 (MVYQKAAMRSA) the chain is Cytoplasmic. The chain crosses the membrane as a helical span at residues 116-138 (INILLASLAFADMLLAVLNMPFA). At 139–157 (LVTILTTRWIFGKFFCRVS) the chain is on the extracellular side. A helical transmembrane segment spans residues 158–177 (AMFFWLFVIEGVAILLIISI). Residues 178–196 (DRFLIIVQRQDKLNPYRAK) lie on the Cytoplasmic side of the membrane. Residues 197 to 216 (VLIAVSWATSFCVAFPLAVG) traverse the membrane as a helical segment. The Extracellular portion of the chain corresponds to 217-240 (NPDLQIPSRAPQCVFGYTTNPGYQ). Residues 241 to 263 (AYVILISLISFFIPFLVILYSFM) form a helical membrane-spanning segment. The Cytoplasmic portion of the chain corresponds to 264-315 (GILNTLRHNALRIHSYPEGICLSQASKLGLMSLQRPFQMSIDMGFKTRAFTT). The helical transmembrane segment at 316–338 (ILILFAVFIVCWAPFTTYSLVAT) threads the bilayer. Residues 339–352 (FSKHFYYQHNFFEI) lie on the Extracellular side of the membrane. Residues 353-375 (STWLLWLCYLKSALNPLIYYWRI) traverse the membrane as a helical segment. The Cytoplasmic segment spans residues 376 to 419 (KKFHDACLDMMPKSFKFLPQLPGHTKRRIRPSAVYVCGEHRTVV).

Belongs to the G-protein coupled receptor 1 family. Expressed in brain; detected in the frontal cortex, with lower levels in the thalamus, caudate, hypothalamus and midbrain.

The protein localises to the cell membrane. In terms of biological role, orphan receptor. May play a role in brain function. This Homo sapiens (Human) protein is Probable G-protein coupled receptor 63 (GPR63).